We begin with the raw amino-acid sequence, 1011 residues long: Ankyrin repeat domain-containing protein 18B (1011 aa).

5 ANK repeats span residues 67 to 96 (KDRT…QINI), 100 to 129 (LNRT…NPNI), 133 to 162 (YGNT…NIEA), 166 to 195 (EGNT…NIHA), and 199 to 228 (FKRT…HISS). 2 disordered regions span residues 264-330 (LRND…GKKK) and 533-554 (MHPN…SEER). 4 coiled-coil regions span residues 277–319 (ENLK…ENKQ), 385–639 (NEEM…ELVD), 692–722 (ISLL…CLEM), and 752–908 (FKKL…EAFA). Over residues 280-293 (KKRKKRKKLKKRKE) the composition is skewed to basic residues. Basic and acidic residues predominate over residues 294–319 (GAKAEHNLKVASEEKQERLERSENKQ).

The chain is Ankyrin repeat domain-containing protein 18B (ANKRD18B) from Homo sapiens (Human).